We begin with the raw amino-acid sequence, 53 residues long: Cytochrome c-552 (53 aa).

Residues Cys-19, Cys-22, His-23, and Met-44 each contribute to the heme c site.

Post-translationally, binds 1 heme c group covalently per subunit.

Its subcellular location is the cell membrane. The chain is Cytochrome c-552 from Schinkia azotoformans (Bacillus azotoformans).